The chain runs to 845 residues: Leucine--tRNA ligase (845 aa).

Positions 40–51 (PYPSGAGLHVGH) match the 'HIGH' region motif. A 'KMSKS' region motif is present at residues 623–627 (KMSKS). K626 serves as a coordination point for ATP.

This sequence belongs to the class-I aminoacyl-tRNA synthetase family.

The protein resides in the cytoplasm. It carries out the reaction tRNA(Leu) + L-leucine + ATP = L-leucyl-tRNA(Leu) + AMP + diphosphate. This Protochlamydia amoebophila (strain UWE25) protein is Leucine--tRNA ligase.